We begin with the raw amino-acid sequence, 115 residues long: Replication initiation control protein YabA (115 aa).

4 residues coordinate Zn(2+): His90, Cys92, Cys106, and Cys109.

It belongs to the YabA family. In terms of assembly, homotetramer. Interacts with both DnaA and DnaN, acting as a bridge between these two proteins. Zn(2+) is required as a cofactor.

It is found in the cytoplasm. The protein resides in the nucleoid. In terms of biological role, involved in control of chromosome replication initiation. Inhibits the cooperative binding of DnaA to the oriC region, thus negatively regulating initiation of chromosome replication. Inhibits the ability of DnaA-ATP to form a helix on DNA; does not disassemble preformed DnaA-DNA helices. Decreases the residence time of DnaA on the chromosome at its binding sites (oriC, replication forks and promoter-binding sites). Tethers DnaA to the replication machinery via the DNA polymerase beta sliding clamp subunit (dnaN). Associates with oriC and other DnaA targets on the chromosome in a DnaA-dependent manner. This Staphylococcus aureus (strain bovine RF122 / ET3-1) protein is Replication initiation control protein YabA.